A 395-amino-acid chain; its full sequence is tRNA (guanine-N(7)-)-methyltransferase (395 aa).

S-adenosyl-L-methionine is bound by residues E126, E151, and D178. Substrate-binding residues include K204 and D234.

It belongs to the class I-like SAM-binding methyltransferase superfamily. TrmB family.

It carries out the reaction guanosine(46) in tRNA + S-adenosyl-L-methionine = N(7)-methylguanosine(46) in tRNA + S-adenosyl-L-homocysteine. It functions in the pathway tRNA modification; N(7)-methylguanine-tRNA biosynthesis. Its function is as follows. Catalyzes the formation of N(7)-methylguanine at position 46 (m7G46) in tRNA. The sequence is that of tRNA (guanine-N(7)-)-methyltransferase from Campylobacter fetus subsp. fetus (strain 82-40).